Reading from the N-terminus, the 181-residue chain is Oligoribonuclease (181 aa).

The region spanning 8 to 171 (LIWVDLEMTG…DDIHDSIAEL (164 aa)) is the Exonuclease domain. Y129 is an active-site residue.

Belongs to the oligoribonuclease family.

It localises to the cytoplasm. 3'-to-5' exoribonuclease specific for small oligoribonucleotides. In Photobacterium profundum (strain SS9), this protein is Oligoribonuclease.